A 3511-amino-acid chain; its full sequence is Unconventional myosin-XV (3511 aa).

Disordered regions lie at residues 1-44 (MADE…TPKI), 574-690 (KKPI…SLRQ), 712-1030 (FAEP…PNKN), and 1105-1135 (VSSFRPKGPAPVQPPEHPDQDPEQGPAPQAC). A compositionally biased stretch (polar residues) spans 622–634 (SQPQARNNNNSHG). Residues 654–672 (PPMPAPSPSPASPLTPPFS) are compositionally biased toward pro residues. A compositionally biased stretch (low complexity) spans 769-792 (PSLRSLPGQGYHSPLGPLSPQLSL). The segment covering 797–807 (FQPPFPPPPRR) has biased composition (pro residues). The 678-residue stretch at 1206 to 1883 (DGVEDMTQLE…LHQLLESMRE (678 aa)) folds into the Myosin motor domain. Residue 1299–1306 (GESGSGKT) coordinates ATP. Residues 1307–1334 (EATKLILRCLAAMNQRRDVMQQIKILEA) adopt a coiled-coil conformation. The segment at 1776 to 1783 (FVRCLKPN) is actin-binding. Positions 1872 to 2013 (EHLHQLLESM…SSGPRVAVVR (142 aa)) are neck or regulatory domain. IQ domains follow at residues 1886 to 1908 (QNRAALTLQRYLRGFFIQRHFRS) and 1909 to 1938 (LRRKIILLQSRARGFLARQRYQQMRQSLLK). The interval 2014 to 3511 (APRLQAEPCV…TLPPSEITLL (1498 aa)) is tail. The MyTH4 1 domain occupies 2049 to 2195 (MLTVPLKMPL…PTQLEWTAIQ (147 aa)). Disordered regions lie at residues 2330-2359 (SHKEDGTNGETEAQRWTSNRQAVDSIGEST), 2392-2425 (YRMKGGGQPGGGGGSTSEDTSRRPPEPKLKPIPG), 2460-2509 (PLSA…SVAK), 2565-2584 (KQPPWAGHPEARRTDGGKVF), and 2629-2648 (RPCMGPTPVQPSRSLEPPED). A compositionally biased stretch (polar residues) spans 2337–2351 (NGETEAQRWTSNRQA). A compositionally biased stretch (gly residues) spans 2395-2406 (KGGGQPGGGGGS). The span at 2410-2420 (DTSRRPPEPKL) shows a compositional bias: basic and acidic residues. Residues 2573–2584 (PEARRTDGGKVF) are compositionally biased toward basic and acidic residues. Residues 2848 to 2934 (KDSDYVVAVR…PSELVQPAAA (87 aa)) form the SH3 domain. The tract at residues 2964–2984 (EVGRRREGPPVRARSADSGED) is disordered. Residues 2965–2980 (VGRRREGPPVRARSAD) show a composition bias toward basic and acidic residues. Positions 3031–3185 (FTKVPIQESL…PSNMELRAML (155 aa)) constitute a MyTH4 2 domain. One can recognise an FERM domain in the interval 3190–3511 (SKRQLFLLPG…TLPPSEITLL (322 aa)).

This sequence belongs to the TRAFAC class myosin-kinesin ATPase superfamily. Myosin family. Interacts with the third PDZ domain of WHRN which is necessary for localization of WHRN to stereocilium tips. Interacts with FASLG. Interacts with EPS8. In the developing inner ear, expressed in cochlea and vestibular apparatus. Expression appears to be restricted to cochlear neurosensory cells and upper epithelial layer of macula saccula. Also expressed in macula utriculi and cristae ampullaris of the semicircular canals. In adult cochlear hair cells, highest expression in stereocilia and apical body.

It is found in the cell projection. Its subcellular location is the stereocilium. The protein resides in the cytoplasm. The protein localises to the cytoskeleton. In terms of biological role, myosins are actin-based motor molecules with ATPase activity. Unconventional myosins serve in intracellular movements. Their highly divergent tails are presumed to bind to membranous compartments, which would be moved relative to actin filaments. Required for the arrangement of stereocilia in mature hair bundles. The sequence is that of Unconventional myosin-XV (Myo15a) from Mus musculus (Mouse).